Reading from the N-terminus, the 37-residue chain is Large ribosomal subunit protein bL36c (37 aa).

This sequence belongs to the bacterial ribosomal protein bL36 family.

It localises to the plastid. It is found in the chloroplast. This is Large ribosomal subunit protein bL36c from Oltmannsiellopsis viridis (Marine flagellate).